Consider the following 67-residue polypeptide: uncharacterized protein (67 aa).

It belongs to the baculoviridae 8 kDa protein family.

This is an uncharacterized protein from Autographa californica nuclear polyhedrosis virus (AcMNPV).